The sequence spans 449 residues: Elongation factor 1-alpha 1 (449 aa).

Residues 5–230 (KVHMNLVVVG…DMLEPPVRPS (226 aa)) form the tr-type G domain. The G1 stretch occupies residues 14 to 21 (GHVDAGKS). 14-21 (GHVDAGKS) serves as a coordination point for GTP. Residues 70–74 (GITID) form a G2 region. The tract at residues 91–94 (DAPG) is G3. GTP is bound by residues 91-95 (DAPGH) and 153-156 (NKMD). Residues 153 to 156 (NKMD) are G4. Residues 194-196 (SGW) form a G5 region. At Glu-362 the chain carries 5-glutamyl glycerylphosphorylethanolamine.

This sequence belongs to the TRAFAC class translation factor GTPase superfamily. Classic translation factor GTPase family. EF-Tu/EF-1A subfamily. In terms of processing, phosphatidylethanolamine (PE) is a direct precursor of the ethanolamine-phosphoglycerol (EPG) moiety.

It localises to the cytoplasm. In terms of biological role, this protein promotes the GTP-dependent binding of aminoacyl-tRNA to the A-site of ribosomes during protein biosynthesis. The polypeptide is Elongation factor 1-alpha 1 (TEF1) (Trypanosoma brucei brucei (strain 927/4 GUTat10.1)).